We begin with the raw amino-acid sequence, 181 residues long: Isopentenyl-diphosphate Delta-isomerase (181 aa).

Residues H24 and H30 each contribute to the Mn(2+) site. The Nudix hydrolase domain maps to 28-168; sequence LLHLAFSVLL…PDTFSVWFPT (141 aa). C68 is a catalytic residue. Position 68 (C68) interacts with Mg(2+). Position 70 (H70) interacts with Mn(2+). E88 provides a ligand contact to Mg(2+). Mn(2+) is bound by residues E117 and E119. E119 is an active-site residue.

Belongs to the IPP isomerase type 1 family. Mg(2+) serves as cofactor. Mn(2+) is required as a cofactor.

The protein localises to the cytoplasm. It catalyses the reaction isopentenyl diphosphate = dimethylallyl diphosphate. It participates in isoprenoid biosynthesis; dimethylallyl diphosphate biosynthesis; dimethylallyl diphosphate from isopentenyl diphosphate: step 1/1. In terms of biological role, catalyzes the 1,3-allylic rearrangement of the homoallylic substrate isopentenyl (IPP) to its highly electrophilic allylic isomer, dimethylallyl diphosphate (DMAPP). The protein is Isopentenyl-diphosphate Delta-isomerase of Aliivibrio fischeri (strain ATCC 700601 / ES114) (Vibrio fischeri).